Reading from the N-terminus, the 631-residue chain is Chaperone protein HtpG (631 aa).

Residues 1-339 (MSAQKETLGF…SNDLPLNVSR (339 aa)) are a; substrate-binding. The b stretch occupies residues 340-556 (EILQESKDID…EHDMSAHLER (217 aa)). A c region spans residues 557–631 (MLKAAGQKIE…INKLMLELSV (75 aa)).

It belongs to the heat shock protein 90 family. In terms of assembly, homodimer.

The protein localises to the cytoplasm. Molecular chaperone. Has ATPase activity. The chain is Chaperone protein HtpG from Chromobacterium violaceum (strain ATCC 12472 / DSM 30191 / JCM 1249 / CCUG 213 / NBRC 12614 / NCIMB 9131 / NCTC 9757 / MK).